A 182-amino-acid chain; its full sequence is ATP synthase subunit delta (182 aa).

It belongs to the ATPase delta chain family. F-type ATPases have 2 components, F(1) - the catalytic core - and F(0) - the membrane proton channel. F(1) has five subunits: alpha(3), beta(3), gamma(1), delta(1), epsilon(1). F(0) has three main subunits: a(1), b(2) and c(10-14). The alpha and beta chains form an alternating ring which encloses part of the gamma chain. F(1) is attached to F(0) by a central stalk formed by the gamma and epsilon chains, while a peripheral stalk is formed by the delta and b chains.

The protein resides in the cell membrane. Functionally, f(1)F(0) ATP synthase produces ATP from ADP in the presence of a proton or sodium gradient. F-type ATPases consist of two structural domains, F(1) containing the extramembraneous catalytic core and F(0) containing the membrane proton channel, linked together by a central stalk and a peripheral stalk. During catalysis, ATP synthesis in the catalytic domain of F(1) is coupled via a rotary mechanism of the central stalk subunits to proton translocation. This protein is part of the stalk that links CF(0) to CF(1). It either transmits conformational changes from CF(0) to CF(1) or is implicated in proton conduction. The protein is ATP synthase subunit delta of Lachnoclostridium phytofermentans (strain ATCC 700394 / DSM 18823 / ISDg) (Clostridium phytofermentans).